Here is a 381-residue protein sequence, read N- to C-terminus: Peptidoglycan glycosyltransferase MrdB (381 aa).

The next 10 membrane-spanning stretches (helical) occupy residues phenylalanine 11 to phenylalanine 31, lysine 40 to phenylalanine 60, tryptophan 66 to tyrosine 86, phenylalanine 99 to alanine 119, tyrosine 132 to leucine 152, aspartate 156 to leucine 176, valine 180 to histidine 200, phenylalanine 263 to phenylalanine 283, isoleucine 297 to threonine 317, and leucine 328 to leucine 348.

This sequence belongs to the SEDS family. MrdB/RodA subfamily.

It localises to the cell inner membrane. It carries out the reaction [GlcNAc-(1-&gt;4)-Mur2Ac(oyl-L-Ala-gamma-D-Glu-L-Lys-D-Ala-D-Ala)](n)-di-trans,octa-cis-undecaprenyl diphosphate + beta-D-GlcNAc-(1-&gt;4)-Mur2Ac(oyl-L-Ala-gamma-D-Glu-L-Lys-D-Ala-D-Ala)-di-trans,octa-cis-undecaprenyl diphosphate = [GlcNAc-(1-&gt;4)-Mur2Ac(oyl-L-Ala-gamma-D-Glu-L-Lys-D-Ala-D-Ala)](n+1)-di-trans,octa-cis-undecaprenyl diphosphate + di-trans,octa-cis-undecaprenyl diphosphate + H(+). It functions in the pathway cell wall biogenesis; peptidoglycan biosynthesis. In terms of biological role, peptidoglycan polymerase that is essential for cell wall elongation. This is Peptidoglycan glycosyltransferase MrdB from Helicobacter pylori (strain ATCC 700392 / 26695) (Campylobacter pylori).